Here is a 309-residue protein sequence, read N- to C-terminus: Homoserine O-succinyltransferase (309 aa).

The active-site Acyl-thioester intermediate is the Cys142. 2 residues coordinate substrate: Lys163 and Ser192. His235 acts as the Proton acceptor in catalysis. Glu237 is a catalytic residue. Substrate is bound at residue Arg249.

Belongs to the MetA family.

The protein resides in the cytoplasm. It catalyses the reaction L-homoserine + succinyl-CoA = O-succinyl-L-homoserine + CoA. Its pathway is amino-acid biosynthesis; L-methionine biosynthesis via de novo pathway; O-succinyl-L-homoserine from L-homoserine: step 1/1. In terms of biological role, transfers a succinyl group from succinyl-CoA to L-homoserine, forming succinyl-L-homoserine. The protein is Homoserine O-succinyltransferase of Edwardsiella ictaluri (strain 93-146).